A 111-amino-acid chain; its full sequence is Universal stress protein B (111 aa).

2 helical membrane passes run 1-21 and 90-110; these read MFST…NMMR and FILT…MLIW.

The protein belongs to the universal stress protein B family.

The protein resides in the cell inner membrane. This chain is Universal stress protein B, found in Photorhabdus laumondii subsp. laumondii (strain DSM 15139 / CIP 105565 / TT01) (Photorhabdus luminescens subsp. laumondii).